We begin with the raw amino-acid sequence, 648 residues long: MWMGVGDSSGSPKPIRIVVVGEKGSGKSSLIMAAARNTFHPNIPSLLPYTNLPSEFFPDRIPATVIDTSSRPEDKGKVVKEVRQADAIVLTFAFDRPETLDRLSKYWLPLFRQLEVRVPIIVAGYEVDNKEAYNHFSIEQITSALMKQYREVETSIQWSAQRLDQAKDVLYYAQKAVIDPVGPVFDQENNVLKPRCIAALKRIFLLSDHNMDGILSDEELNELQKKCFDTPLVPCEIKQMKNVMQVTFPQGVNERGLTLDGFLFLNTRLIEEARIQTLWTMLRKFGYSNDLRLGDDLVPYSSFKRQADQSVELTNVAIEFLREVYEFFDSNGDNNLEPHEMGYLFETAPESPWTKPLYKDVTEENMDGGLSLEAFLSLWSLMTLIDPPRSLEYLMYIRFPSDDPSSAVRVTRKRVLDRKEKKSERKVVQCFVFGPKNAGKSALLNQFIGRSYDDDSNNNNGSTDEHYAVNMVKEPGVISDTDKTLVLKEVRIKDDGFMLSKEALAACDVAIFIYDSSDEYSWNRAVDMLAEVATIAKDSGYVFPCLMVAAKTDLDPFPVAIQESTRVTQDIGIDAPIPISSKLGDVSNLFRKILTAAENPHLNIPEIESKKKRSCKLNNRSLMAVSIGTAVLIAGLASFRLYTARKQS.

Topologically, residues 1–621 (MWMGVGDSSG…KRSCKLNNRS (621 aa)) are cytoplasmic. Residue serine 11 is modified to Phosphoserine. A Miro 1 domain is found at 12–179 (PKPIRIVVVG…LYYAQKAVID (168 aa)). EF-hand domains are found at residues 195–230 (RCIA…CFDT) and 316–351 (VAIE…APES). Residues aspartate 208, asparagine 210, aspartate 212, glutamate 219, aspartate 329, asparagine 331, aspartate 333, asparagine 335, and glutamate 340 each contribute to the Ca(2+) site. Residues 425 to 599 (RKVVQCFVFG…FRKILTAAEN (175 aa)) enclose the Miro 2 domain. The helical transmembrane segment at 622–644 (LMAVSIGTAVLIAGLASFRLYTA) threads the bilayer. At 645-648 (RKQS) the chain is on the mitochondrial intermembrane side.

This sequence belongs to the mitochondrial Rho GTPase family. As to expression, expressed at very low levels in roots, leaves, stems, flowers and siliques.

Its subcellular location is the mitochondrion outer membrane. Its function is as follows. Mitochondrial GTPase that may be involved in mitochondrion development. The polypeptide is Mitochondrial Rho GTPase 3 (Arabidopsis thaliana (Mouse-ear cress)).